The primary structure comprises 430 residues: Adenylosuccinate synthetase (430 aa).

Residues 12-18 (GDEGKGK) and 40-42 (GHT) contribute to the GTP site. The active-site Proton acceptor is the aspartate 13. Mg(2+) is bound by residues aspartate 13 and glycine 40. IMP contacts are provided by residues 13 to 16 (DEGK), 38 to 41 (NAGH), threonine 128, arginine 142, glutamine 223, threonine 238, and arginine 302. Histidine 41 (proton donor) is an active-site residue. 298–304 (TTTGRPR) lines the substrate pocket. GTP-binding positions include arginine 304, 330 to 332 (LLD), and 412 to 414 (SVG).

It belongs to the adenylosuccinate synthetase family. Homodimer. Requires Mg(2+) as cofactor.

The protein localises to the cytoplasm. It catalyses the reaction IMP + L-aspartate + GTP = N(6)-(1,2-dicarboxyethyl)-AMP + GDP + phosphate + 2 H(+). It participates in purine metabolism; AMP biosynthesis via de novo pathway; AMP from IMP: step 1/2. Plays an important role in the de novo pathway of purine nucleotide biosynthesis. Catalyzes the first committed step in the biosynthesis of AMP from IMP. This is Adenylosuccinate synthetase from Listeria monocytogenes serotype 4b (strain CLIP80459).